Here is a 607-residue protein sequence, read N- to C-terminus: UvrABC system protein C (607 aa).

Residues 16–94 (GRPGVYRMFD…IKEWRPPYNI (79 aa)) enclose the GIY-YIG domain. The UVR domain maps to 203-238 (NALSDELNASMEKAAMALDFERAAELRDQVALLRRV).

This sequence belongs to the UvrC family. As to quaternary structure, interacts with UvrB in an incision complex.

Its subcellular location is the cytoplasm. In terms of biological role, the UvrABC repair system catalyzes the recognition and processing of DNA lesions. UvrC both incises the 5' and 3' sides of the lesion. The N-terminal half is responsible for the 3' incision and the C-terminal half is responsible for the 5' incision. The polypeptide is UvrABC system protein C (Pseudomonas syringae pv. tomato (strain ATCC BAA-871 / DC3000)).